The following is a 736-amino-acid chain: Peroxisomal multifunctional enzyme type 2 (736 aa).

The tract at residues 1–305 (MGSPLRFDGR…IEVLSKIDSE (305 aa)) is (3R)-hydroxyacyl-CoA dehydrogenase. NAD(+) contacts are provided by residues 13-37 (LVTG…ALVV), Leu21, and Asp40. Lys46 is subject to N6-acetyllysine; alternate. Position 46 is an N6-succinyllysine; alternate (Lys46). Phosphoserine is present on Ser52. Residues Lys57 and Lys68 each carry the N6-succinyllysine modification. Residue 75–76 (SV) participates in NAD(+) binding. Lys84 bears the N6-succinyllysine mark. Residue Asn99 participates in NAD(+) binding. Position 151 (Ser151) interacts with substrate. Tyr164 serves as the catalytic Proton acceptor. Residues 164–168 (YSAAK) and 196–199 (AGSR) contribute to the NAD(+) site. Residue Thr265 is modified to Phosphothreonine. Position 275 is an N6-succinyllysine (Lys275). Phosphoserine occurs at positions 304 and 309. Positions 322–622 (SGFAGAIGQK…AKTPSEGGKL (301 aa)) are enoyl-CoA hydratase 2. Position 356 is an N6-succinyllysine (Lys356). 406 to 407 (HG) is a (3R)-3-hydroxydecanoyl-CoA binding site. Lys424 is modified (N6-succinyllysine). Residues Lys435, 510-515 (DWNPLH), Gly533, and Phe563 contribute to the (3R)-3-hydroxydecanoyl-CoA site. The MaoC-like domain occupies 484-600 (IPNRPPDAVL…QETGDIVISN (117 aa)). Lys565 bears the N6-acetyllysine mark. Residues Lys579 and Lys663 each carry the N6-succinyllysine modification. An SCP2 domain is found at 624 to 736 (STFVFEEIGR…QMILKDYAKL (113 aa)). Lys669 bears the N6-acetyllysine mark. A substrate-binding site is contributed by Gln706. Lys707 bears the N6-acetyllysine mark. Gln724 is a binding site for substrate. Lys725 bears the N6-succinyllysine mark. Residues 734-736 (AKL) carry the Microbody targeting signal motif.

This sequence belongs to the short-chain dehydrogenases/reductases (SDR) family. As to quaternary structure, homodimer. Present in many tissues with highest concentrations in liver, heart, prostate and testis.

It is found in the peroxisome. The catalysed reaction is a (3R)-3-hydroxyacyl-CoA + NAD(+) = a 3-oxoacyl-CoA + NADH + H(+). It carries out the reaction a (3R)-3-hydroxyacyl-CoA = a (2E)-enoyl-CoA + H2O. It catalyses the reaction (24R,25R)-3alpha,7alpha,12alpha,24-tetrahydroxy-5beta-cholestan-26-oyl-CoA = (24E)-3alpha,7alpha,12alpha-trihydroxy-5beta-cholest-24-en-26-oyl-CoA + H2O. The enzyme catalyses (2E)-octenoyl-CoA + H2O = (3R)-hydroxyoctanoyl-CoA. The catalysed reaction is (3R)-hydroxyoctanoyl-CoA + NAD(+) = 3-oxooctanoyl-CoA + NADH + H(+). It carries out the reaction (3R)-hydroxyhexadecanoyl-CoA + NAD(+) = 3-oxohexadecanoyl-CoA + NADH + H(+). It catalyses the reaction (2E)-hexadecenedioyl-CoA + H2O = (3R)-hydroxyhexadecanedioyl-CoA. The enzyme catalyses (3R)-hydroxyhexadecanedioyl-CoA + NAD(+) = 3-oxohexadecanedioyl-CoA + NADH + H(+). The catalysed reaction is (3R)-hydroxyhexadecanoyl-CoA = (2E)-hexadecenoyl-CoA + H2O. It carries out the reaction (3R)-3-hydroxydecanoyl-CoA = (2E)-decenoyl-CoA + H2O. It catalyses the reaction (3R)-3-hydroxydecanoyl-CoA + NAD(+) = 3-oxodecanoyl-CoA + NADH + H(+). The enzyme catalyses (24R,25R)-3alpha,7alpha,12alpha,24-tetrahydroxy-5beta-cholestan-26-oyl-CoA + NAD(+) = 3alpha,7alpha,12alpha-trihydroxy-24-oxo-5beta-cholestan-26-oyl-CoA + NADH + H(+). It functions in the pathway lipid metabolism; fatty acid beta-oxidation. Its function is as follows. Bifunctional enzyme acting on the peroxisomal fatty acid beta-oxidation pathway. Catalyzes two of the four reactions in fatty acid degradation: hydration of 2-enoyl-CoA (trans-2-enoyl-CoA) to produce (3R)-3-hydroxyacyl-CoA, and dehydrogenation of (3R)-3-hydroxyacyl-CoA to produce 3-ketoacyl-CoA (3-oxoacyl-CoA), which is further metabolized by SCPx. Can use straight-chain and branched-chain fatty acids, as well as bile acid intermediates as substrates. The protein is Peroxisomal multifunctional enzyme type 2 of Homo sapiens (Human).